Consider the following 300-residue polypeptide: Bifunctional protein FolD 2 (300 aa).

NADP(+) contacts are provided by residues 165-167 (GRS), S190, and I231.

The protein belongs to the tetrahydrofolate dehydrogenase/cyclohydrolase family. As to quaternary structure, homodimer.

It carries out the reaction (6R)-5,10-methylene-5,6,7,8-tetrahydrofolate + NADP(+) = (6R)-5,10-methenyltetrahydrofolate + NADPH. The catalysed reaction is (6R)-5,10-methenyltetrahydrofolate + H2O = (6R)-10-formyltetrahydrofolate + H(+). The protein operates within one-carbon metabolism; tetrahydrofolate interconversion. Catalyzes the oxidation of 5,10-methylenetetrahydrofolate to 5,10-methenyltetrahydrofolate and then the hydrolysis of 5,10-methenyltetrahydrofolate to 10-formyltetrahydrofolate. This chain is Bifunctional protein FolD 2, found in Pseudomonas syringae pv. syringae (strain B728a).